The chain runs to 88 residues: Protein A19 homolog (88 aa).

The segment at 1–28 (MADSTAGAKKRKKRSTSATSTRKEPPTV) is disordered.

Belongs to the chordopoxvirinae A19 family.

This chain is Protein A19 homolog, found in Fowlpox virus (strain NVSL) (FPV).